The chain runs to 835 residues: Leucine--tRNA ligase (835 aa).

The 'HIGH' region signature appears at 36–46 (PYPSGKIHVGH). The 'KMSKS' region signature appears at 602–606 (KMSKS). Position 605 (K605) interacts with ATP.

This sequence belongs to the class-I aminoacyl-tRNA synthetase family.

Its subcellular location is the cytoplasm. It carries out the reaction tRNA(Leu) + L-leucine + ATP = L-leucyl-tRNA(Leu) + AMP + diphosphate. The chain is Leucine--tRNA ligase from Rickettsia peacockii (strain Rustic).